The following is an 86-amino-acid chain: Exodeoxyribonuclease 7 small subunit (86 aa).

Residues 1–26 are disordered; that stretch reads MQDELFETEKAPQKNAKNAKNAPKKS.

Belongs to the XseB family. Heterooligomer composed of large and small subunits.

The protein localises to the cytoplasm. It catalyses the reaction Exonucleolytic cleavage in either 5'- to 3'- or 3'- to 5'-direction to yield nucleoside 5'-phosphates.. Its function is as follows. Bidirectionally degrades single-stranded DNA into large acid-insoluble oligonucleotides, which are then degraded further into small acid-soluble oligonucleotides. The chain is Exodeoxyribonuclease 7 small subunit from Helicobacter pylori (strain J99 / ATCC 700824) (Campylobacter pylori J99).